The following is a 411-amino-acid chain: Thyroxine-binding globulin (411 aa).

The N-terminal stretch at 1–15 (MPLFSLVLLILGLHC) is a signal peptide. N-linked (GlcNAc...) asparagine glycans are attached at residues asparagine 34, asparagine 97, asparagine 163, and asparagine 251. The thyroxine site is built by asparagine 291 and lysine 394.

It belongs to the serpin family. As to expression, expressed by the liver and secreted in plasma.

The protein localises to the secreted. In terms of biological role, major thyroid hormone transport protein in serum. The sequence is that of Thyroxine-binding globulin (SERPINA7) from Bos taurus (Bovine).